The sequence spans 332 residues: MNPSPLSIHSALSSDALRIDAAAEVDRIAQAMRDQVRNKMRRRGLVIGLSGGVDSSVCAALAAYALGAQNVFAIFMPENDSDPESLSLGQEVAKAFSLEGAIEDIGSALAAMGCYERRDDFIRQVEPAYGSGWSCKVVISSPLAGEGYALSTLVLQAPDGSQTRHRMPASVYLGIVAATNMKQRTRKQMEYYHADRLNYAVLGTPNRLEYDQGFFVKNGDGAADLKPIAHLYKSQVYQIAEYLGVPEEVRRRPPTTDTWSLTQTQEEFYFALPYDRMDLCLHALNEGLGVEETAKATQLTTDQVERVWLDIHSKRKATRPLHLAPLLVQPVF.

48 to 55 (GLSGGVDS) lines the ATP pocket. Mg(2+) is bound at residue Asp-54. Residue Arg-184 participates in deamido-NAD(+) binding. Thr-204 lines the ATP pocket. Residue Glu-209 coordinates Mg(2+). Deamido-NAD(+) contacts are provided by Lys-217 and Asp-224. Residues Lys-233 and Thr-255 each coordinate ATP.

This sequence belongs to the NAD synthetase family. In terms of assembly, homodimer.

The enzyme catalyses deamido-NAD(+) + NH4(+) + ATP = AMP + diphosphate + NAD(+) + H(+). The protein operates within cofactor biosynthesis; NAD(+) biosynthesis; NAD(+) from deamido-NAD(+) (ammonia route): step 1/1. Catalyzes the ATP-dependent amidation of deamido-NAD to form NAD. Uses ammonia as a nitrogen source. This Rhizobium rhizogenes (strain K84 / ATCC BAA-868) (Agrobacterium radiobacter) protein is NH(3)-dependent NAD(+) synthetase.